The sequence spans 156 residues: MPRKGHVAKPEVLPDPIYNSKLVTSLINHLMLDGKRGTASKILYQALDQIKEQTGNDPIEVFEQAMENIKPALEVKARRIGGSNYQVPIEVRPDRQRTLALRWLVQYARLRGEHTMVERLSGEIIDASNNTGASIKKKEDTLRMAEANRAFAHYRW.

Belongs to the universal ribosomal protein uS7 family. In terms of assembly, part of the 30S ribosomal subunit. Contacts proteins S9 and S11.

In terms of biological role, one of the primary rRNA binding proteins, it binds directly to 16S rRNA where it nucleates assembly of the head domain of the 30S subunit. Is located at the subunit interface close to the decoding center, probably blocks exit of the E-site tRNA. This is Small ribosomal subunit protein uS7 from Limosilactobacillus fermentum (strain NBRC 3956 / LMG 18251) (Lactobacillus fermentum).